The sequence spans 1094 residues: Transport and Golgi organization protein 6 homolog (1094 aa).

Residues 468 to 488 traverse the membrane as a helical segment; it reads LTVLMDSLLPVLGVLFLLYCF. Ser556 bears the Phosphoserine mark. Positions 777–795 are enriched in basic and acidic residues; it reads EEQQQTSHERPTDVAHSHL. The tract at residues 777-834 is disordered; it reads EEQQQTSHERPTDVAHSHLEQQQSHETAPQTGLQSNAPIIPQGVNEPSTTTSQKSGSV. Polar residues-rich tracts occupy residues 796-813 and 821-834; these read EQQQSHETAPQTGLQSNA and NEPSTTTSQKSGSV. HEAT repeat units follow at residues 873 to 909 and 952 to 988; these read LEMQEKLLKIFLENLEHEDTFVYLSAIQGVALLSDVY and SKYREPLIHTFLRGVRDPDGAHRASSLANLGELCQRL.

The protein belongs to the Tango6 family.

It localises to the membrane. This Homo sapiens (Human) protein is Transport and Golgi organization protein 6 homolog (TANGO6).